A 90-amino-acid polypeptide reads, in one-letter code: Acylphosphatase (90 aa).

Residues Asn-3–Tyr-90 form the Acylphosphatase-like domain. Catalysis depends on residues Arg-18 and Asn-36.

Belongs to the acylphosphatase family.

It carries out the reaction an acyl phosphate + H2O = a carboxylate + phosphate + H(+). In Ligilactobacillus salivarius (strain UCC118) (Lactobacillus salivarius), this protein is Acylphosphatase (acyP).